A 516-amino-acid chain; its full sequence is Polyprenol-phosphate-mannose--protein mannosyltransferase (516 aa).

Transmembrane regions (helical) follow at residues 113–133, 143–163, 166–186, 234–254, 275–295, 384–404, 413–433, 437–457, and 473–493; these read YNGLGWRFSGAVCGVIIVMLV, STLVGAIAGLLIIADGVSFVS, TALLDVFLVMFAVAAFACLMV, WSGLYFVLFFGVMTLVFDAIA, AAYVFGLIPFAVYLASYAPWF, VMLVGTPAMWFIAVPVLGWAL, WRYGAVLVGYMAGFLPWFADI, MYFFYATVMAPFLVLAIALIL, and LGLLTVCFYVALVITNFAWMY.

The protein belongs to the glycosyltransferase 39 family.

The protein resides in the cell membrane. Its pathway is protein modification; protein glycosylation. In terms of biological role, protein O-mannosyltransferase that catalyzes the transfer of a single mannose residue from a polyprenol phospho-mannosyl lipidic donor to the hydroxyl group of selected serine and threonine residues in acceptor proteins. The protein is Polyprenol-phosphate-mannose--protein mannosyltransferase of Mycolicibacterium smegmatis (strain ATCC 700084 / mc(2)155) (Mycobacterium smegmatis).